The sequence spans 102 residues: NADH-quinone oxidoreductase subunit K 1 (102 aa).

The next 3 helical transmembrane spans lie at 6-26 (LNAY…GVLV), 31-51 (LAIL…FVAF), and 65-85 (FLVI…TVLL).

The protein belongs to the complex I subunit 4L family. In terms of assembly, NDH-1 is composed of 14 different subunits. Subunits NuoA, H, J, K, L, M, N constitute the membrane sector of the complex.

It is found in the cell membrane. It carries out the reaction a quinone + NADH + 5 H(+)(in) = a quinol + NAD(+) + 4 H(+)(out). Its function is as follows. NDH-1 shuttles electrons from NADH, via FMN and iron-sulfur (Fe-S) centers, to quinones in the respiratory chain. The immediate electron acceptor for the enzyme in this species is believed to be a menaquinone. Couples the redox reaction to proton translocation (for every two electrons transferred, four hydrogen ions are translocated across the cytoplasmic membrane), and thus conserves the redox energy in a proton gradient. In Symbiobacterium thermophilum (strain DSM 24528 / JCM 14929 / IAM 14863 / T), this protein is NADH-quinone oxidoreductase subunit K 1.